Here is a 326-residue protein sequence, read N- to C-terminus: uncharacterized protein (326 aa).

Solcar repeat units lie at residues 20–107 (QDSN…CKKK), 120–219 (LTNT…LREF), and 231–322 (KSNL…VCDS). 6 helical membrane passes run 24–40 (IAFL…RTVV), 84–104 (GLNC…YEAC), 126–143 (LFSG…TYPL), 195–213 (VWPT…FAVY), 237–254 (LTIG…TYPF), and 297–316 (GLAA…WLVY).

The protein belongs to the mitochondrial carrier (TC 2.A.29) family.

It localises to the mitochondrion inner membrane. This is an uncharacterized protein from Saccharomyces cerevisiae (strain ATCC 204508 / S288c) (Baker's yeast).